A 92-amino-acid polypeptide reads, in one-letter code: Large ribosomal subunit protein bL25 (92 aa).

The protein belongs to the bacterial ribosomal protein bL25 family. Part of the 50S ribosomal subunit; part of the 5S rRNA/L5/L18/L25 subcomplex. Contacts the 5S rRNA. Binds to the 5S rRNA independently of L5 and L18.

In terms of biological role, this is one of the proteins that binds to the 5S RNA in the ribosome where it forms part of the central protuberance. The sequence is that of Large ribosomal subunit protein bL25 from Photobacterium damsela subsp. piscicida (Pasteurella piscicida).